An 844-amino-acid polypeptide reads, in one-letter code: Penicillin-binding protein 1B (844 aa).

The segment covering 1 to 10 has biased composition (basic and acidic residues); sequence MAGNDREPIG. The tract at residues 1-60 is disordered; sequence MAGNDREPIGRKGKPTRPVKQKVSRRRYEDDDDYDDYDDYEDEEPMPRKGKGKGKGRKPR. At 1-63 the chain is on the cytoplasmic side; it reads MAGNDREPIG…GKGRKPRGKR (63 aa). The span at 11–25 shows a compositional bias: basic residues; it reads RKGKPTRPVKQKVSR. Residues 30–44 are compositionally biased toward acidic residues; the sequence is DDDDYDDYDDYEDEE. Residues 48–60 show a composition bias toward basic residues; that stretch reads RKGKGKGKGRKPR. Residues 64–87 form a helical; Signal-anchor for type II membrane protein membrane-spanning segment; that stretch reads GWLWLLLKLAIVFAVLIAIYGVYL. The tract at residues 88–250 is membrane association; the sequence is DQKIRSRIDG…DGISLYSIGR (163 aa). Over 88–844 the chain is Periplasmic; sequence DQKIRSRIDG…GWIKDMFGSN (757 aa). The uvrB domain 2 homolog stretch occupies residues 109 to 200; it reads RMVNLEPDMT…QFGFFRLDPR (92 aa). Positions 195-367 are transglycosylase; that stretch reads FRLDPRLITM…SIYNPWRNPK (173 aa). Residue glutamate 233 is the Proton donor; for transglycosylase activity of the active site. The tract at residues 444–736 is transpeptidase; it reads SVAQDAAEKA…NNQPTKLYGA (293 aa). Catalysis depends on serine 510, which acts as the Acyl-ester intermediate; for transpeptidase activity. Positions 793–825 are enriched in low complexity; the sequence is LCQQSEMQQQPSGNPFDQSSQPQQQPQQQPAQQ. The segment at 793-835 is disordered; it reads LCQQSEMQQQPSGNPFDQSSQPQQQPQQQPAQQEQKDSDGVAG.

This sequence in the N-terminal section; belongs to the glycosyltransferase 51 family. The protein in the C-terminal section; belongs to the transpeptidase family. Forms a trimeric complex with MipA and MltA. Has also been shown to exist as monomer or homodimer; homodimer of Alpha and Gamma isozymes can be found. Interacts with UvrA, FtsL and FtsN.

The protein localises to the cell inner membrane. It carries out the reaction [GlcNAc-(1-&gt;4)-Mur2Ac(oyl-L-Ala-gamma-D-Glu-L-Lys-D-Ala-D-Ala)](n)-di-trans,octa-cis-undecaprenyl diphosphate + beta-D-GlcNAc-(1-&gt;4)-Mur2Ac(oyl-L-Ala-gamma-D-Glu-L-Lys-D-Ala-D-Ala)-di-trans,octa-cis-undecaprenyl diphosphate = [GlcNAc-(1-&gt;4)-Mur2Ac(oyl-L-Ala-gamma-D-Glu-L-Lys-D-Ala-D-Ala)](n+1)-di-trans,octa-cis-undecaprenyl diphosphate + di-trans,octa-cis-undecaprenyl diphosphate + H(+). The catalysed reaction is Preferential cleavage: (Ac)2-L-Lys-D-Ala-|-D-Ala. Also transpeptidation of peptidyl-alanyl moieties that are N-acyl substituents of D-alanine.. It participates in cell wall biogenesis; peptidoglycan biosynthesis. In terms of biological role, cell wall formation. Synthesis of cross-linked peptidoglycan from the lipid intermediates. The enzyme has a penicillin-insensitive transglycosylase N-terminal domain (formation of linear glycan strands) and a penicillin-sensitive transpeptidase C-terminal domain (cross-linking of the peptide subunits). The chain is Penicillin-binding protein 1B (mrcB) from Escherichia coli (strain K12).